Reading from the N-terminus, the 178-residue chain is ATP synthase subunit delta (178 aa).

The protein belongs to the ATPase delta chain family. F-type ATPases have 2 components, F(1) - the catalytic core - and F(0) - the membrane proton channel. F(1) has five subunits: alpha(3), beta(3), gamma(1), delta(1), epsilon(1). F(0) has three main subunits: a(1), b(2) and c(10-14). The alpha and beta chains form an alternating ring which encloses part of the gamma chain. F(1) is attached to F(0) by a central stalk formed by the gamma and epsilon chains, while a peripheral stalk is formed by the delta and b chains.

The protein localises to the cell membrane. Functionally, f(1)F(0) ATP synthase produces ATP from ADP in the presence of a proton or sodium gradient. F-type ATPases consist of two structural domains, F(1) containing the extramembraneous catalytic core and F(0) containing the membrane proton channel, linked together by a central stalk and a peripheral stalk. During catalysis, ATP synthesis in the catalytic domain of F(1) is coupled via a rotary mechanism of the central stalk subunits to proton translocation. Its function is as follows. This protein is part of the stalk that links CF(0) to CF(1). It either transmits conformational changes from CF(0) to CF(1) or is implicated in proton conduction. In Streptococcus pyogenes serotype M4 (strain MGAS10750), this protein is ATP synthase subunit delta.